A 506-amino-acid polypeptide reads, in one-letter code: Maturase K (506 aa).

The protein belongs to the intron maturase 2 family. MatK subfamily.

The protein resides in the plastid. It is found in the chloroplast. In terms of biological role, usually encoded in the trnK tRNA gene intron. Probably assists in splicing its own and other chloroplast group II introns. The polypeptide is Maturase K (Artanema fimbriatum).